A 290-amino-acid polypeptide reads, in one-letter code: 3-deoxy-manno-octulosonate cytidylyltransferase, mitochondrial (290 aa).

Residues 1-50 (MSVCSSSSSSQKTWIVNGILAGTAIAAAIGARAYLGRSKKFRSRVVGIIP) constitute a mitochondrion transit peptide.

This sequence belongs to the KdsB family. Mg(2+) serves as cofactor. In terms of tissue distribution, expressed in roots, leaves, stems and siliques.

The protein resides in the mitochondrion outer membrane. It carries out the reaction 3-deoxy-alpha-D-manno-oct-2-ulosonate + CTP = CMP-3-deoxy-beta-D-manno-octulosonate + diphosphate. Its pathway is nucleotide-sugar biosynthesis; CMP-3-deoxy-D-manno-octulosonate biosynthesis; CMP-3-deoxy-D-manno-octulosonate from 3-deoxy-D-manno-octulosonate and CTP: step 1/1. Its activity is regulated as follows. Inhibited by 2beta-deoxy-Kdo. In terms of biological role, catalyzes the production of the sugar nucleotide CMP-3-deoxy-D-manno-octulosonate (CMP-KDO). CTP is the preferred nucleotide donor, but it can partially be replaced with UTP. Activates KDO during the biosynthesis of rhamnogalacturonan II (RG-II), a structurally complex pectic polysaccharide of the primary cell wall. RG-II is essential for the cell wall integrity of rapidly growing tissues and pollen tube growth and elongation. This Arabidopsis thaliana (Mouse-ear cress) protein is 3-deoxy-manno-octulosonate cytidylyltransferase, mitochondrial.